The following is a 986-amino-acid chain: Ephrin type-A receptor 4-A (986 aa).

An N-terminal signal peptide occupies residues Met1–Val20. Over Thr21 to Val547 the chain is Extracellular. Residues Glu30–Arg209 form the Eph LBD domain. Fibronectin type-III domains are found at residues Pro328 to Ala438 and Ala439 to Ser536. Residues Asn340 and Asn407 are each glycosylated (N-linked (GlcNAc...) asparagine). The helical transmembrane segment at Leu548–Ser569 threads the bilayer. Residues Arg570 to Val986 are Cytoplasmic-facing. Tyr595 and Tyr601 each carry phosphotyrosine; by autocatalysis. A Protein kinase domain is found at Ile620 to Ile881. ATP is bound by residues Ile626–Val634 and Lys652. The Proton acceptor role is filled by Asp745. Phosphotyrosine; by autocatalysis occurs at positions 778 and 928. The region spanning Ser911–Gln975 is the SAM domain. The PDZ-binding motif lies at Val984–Val986.

Belongs to the protein kinase superfamily. Tyr protein kinase family. Ephrin receptor subfamily.

It is found in the cell membrane. The protein resides in the early endosome. It catalyses the reaction L-tyrosyl-[protein] + ATP = O-phospho-L-tyrosyl-[protein] + ADP + H(+). Functionally, receptor tyrosine kinase which binds membrane-bound ephrin family ligands residing on adjacent cells, leading to contact-dependent bidirectional signaling into neighboring cells. The signaling pathway downstream of the receptor is referred to as forward signaling while the signaling pathway downstream of the ephrin ligand is referred to as reverse signaling. Highly promiscuous, it has the unique property among Eph receptors to bind and to be physiologically activated by both GPI-anchored ephrin-A and transmembrane ephrin-B ligands including EFNA1 and EFNB3. Upon activation by ephrin ligands, modulates cell morphology and integrin-dependent cell adhesion through regulation of the Rac, Rap and Rho GTPases activity. Plays an important role in the development of the nervous system controlling different steps of axonal guidance including the establishment of the corticospinal projections. This is Ephrin type-A receptor 4-A (epha4-a) from Xenopus laevis (African clawed frog).